Here is an 859-residue protein sequence, read N- to C-terminus: Active breakpoint cluster region-related protein (859 aa).

A disordered region spans residues 26–84 (TDEYDGEGNEEQKGPPEGSETMPYIDESPTMSPQLSARSQGGGDGVSPTPPEGLAPGVE). Polar residues predominate over residues 54–64 (PTMSPQLSARS). Ser57 is subject to Phosphoserine. Residues 91-284 (MRKLVLSGFL…QNFLSSINED (194 aa)) enclose the DH domain. One can recognise a PH domain in the interval 301-459 (QLVKDGFLVE…WREAIQKLQK (159 aa)). Residues 484–613 (TVHNIPVTSN…ETKNWHTDVI (130 aa)) enclose the C2 domain. A Rho-GAP domain is found at 647 to 845 (VKISVVTKRE…YYLQHPPISF (199 aa)).

In terms of assembly, interacts with DLG4. In terms of tissue distribution, highly enriched in the brain. Much weaker expression in heart, lung and muscle.

Its subcellular location is the cell projection. It localises to the dendritic spine. The protein localises to the axon. The protein resides in the synapse. Its function is as follows. Protein with a unique structure having two opposing regulatory activities toward small GTP-binding proteins. The C-terminus is a GTPase-activating protein domain which stimulates GTP hydrolysis by RAC1, RAC2 and CDC42. Accelerates the intrinsic rate of GTP hydrolysis of RAC1 or CDC42, leading to down-regulation of the active GTP-bound form. The central Dbl homology (DH) domain functions as a guanine nucleotide exchange factor (GEF) that modulates the GTPases CDC42, RHOA and RAC1. Promotes the conversion of CDC42, RHOA and RAC1 from the GDP-bound to the GTP-bound form. Functions as an important negative regulator of neuronal RAC1 activity. Regulates macrophage functions such as CSF-1 directed motility and phagocytosis through the modulation of RAC1 activity. The protein is Active breakpoint cluster region-related protein of Homo sapiens (Human).